The chain runs to 349 residues: MTAFENLTWLHGKPQGNGLLKANPEDFVVVEDLGFEPDGEGEHILVRILKNGCNTRFVADALAKFLKIHAREVSFAGQKDKHAVTEQWLCARVPGNAMPDLSQFELEGCKVLEYARHKRKLRLGALQGNAFTLILRDVTDRDDVEKRLAAIAEQGVPNYFGAQRFGIGGSNLLGALRWAQSDAPVRDRNKRSFWLSAARSALFNQIVSERLKKPDANQVVVGDALQLAGRGSWFVATAEEITDVQTRVDNKTLMITAAMPGSGEWGTQADALAAEQAAIADAPELQSLLMREKVEAARRAMLLYPQKLSWNWWDDVTVELRFWLPAGSFATSVVRELINTSGDYANIAE.

Phe-27 is a binding site for substrate. Asp-80 functions as the Nucleophile in the catalytic mechanism. Asn-129 serves as a coordination point for substrate. The region spanning 155–303 (GVPNYFGAQR…VEAARRAMLL (149 aa)) is the TRUD domain. Substrate is bound at residue Phe-329.

The protein belongs to the pseudouridine synthase TruD family.

It carries out the reaction uridine(13) in tRNA = pseudouridine(13) in tRNA. In terms of biological role, responsible for synthesis of pseudouridine from uracil-13 in transfer RNAs. The polypeptide is tRNA pseudouridine synthase D (Enterobacter sp. (strain 638)).